A 328-amino-acid chain; its full sequence is Serine/threonine protein kinase RdoA (328 aa).

Asp-201 (proton acceptor) is an active-site residue. Mg(2+)-binding residues include Asn-206 and Asp-217. Asp-217 is an active-site residue.

This sequence belongs to the SrkA/RdoA protein kinase family. In terms of assembly, monomer. Mg(2+) is required as a cofactor.

It localises to the cytoplasm. The catalysed reaction is L-seryl-[protein] + ATP = O-phospho-L-seryl-[protein] + ADP + H(+). The enzyme catalyses L-threonyl-[protein] + ATP = O-phospho-L-threonyl-[protein] + ADP + H(+). Functionally, a protein kinase that (auto)phosphorylates on Ser and Thr residues, probably involved in the extracytoplasmic stress response. Probably acts to suppress the effects of stress linked to accumulation of reactive oxygen species. This is Serine/threonine protein kinase RdoA from Salmonella typhimurium (strain LT2 / SGSC1412 / ATCC 700720).